Here is a 293-residue protein sequence, read N- to C-terminus: Ribosomal RNA small subunit methyltransferase A (293 aa).

S-adenosyl-L-methionine-binding residues include N38, V40, G65, E86, D116, and N133.

Belongs to the class I-like SAM-binding methyltransferase superfamily. rRNA adenine N(6)-methyltransferase family. RsmA subfamily.

The protein localises to the cytoplasm. The enzyme catalyses adenosine(1518)/adenosine(1519) in 16S rRNA + 4 S-adenosyl-L-methionine = N(6)-dimethyladenosine(1518)/N(6)-dimethyladenosine(1519) in 16S rRNA + 4 S-adenosyl-L-homocysteine + 4 H(+). In terms of biological role, specifically dimethylates two adjacent adenosines (A1518 and A1519) in the loop of a conserved hairpin near the 3'-end of 16S rRNA in the 30S particle. May play a critical role in biogenesis of 30S subunits. The protein is Ribosomal RNA small subunit methyltransferase A of Paenarthrobacter aurescens (strain TC1).